Reading from the N-terminus, the 276-residue chain is ADP-dependent (S)-NAD(P)H-hydrate dehydratase (276 aa).

Residues 5–269 (TPKAMCAWIP…EELPTYLKIF (265 aa)) enclose the YjeF C-terminal domain. (6S)-NADPHX is bound by residues alanine 40, glycine 103, and histidine 152. Residue glycine 211 coordinates AMP. Aspartate 212 contacts (6S)-NADPHX.

This sequence belongs to the NnrD/CARKD family. Homotetramer. The cofactor is Mg(2+).

It carries out the reaction (6S)-NADHX + ADP = AMP + phosphate + NADH + H(+). The enzyme catalyses (6S)-NADPHX + ADP = AMP + phosphate + NADPH + H(+). Functionally, catalyzes the dehydration of the S-form of NAD(P)HX at the expense of ADP, which is converted to AMP. Together with NAD(P)HX epimerase, which catalyzes the epimerization of the S- and R-forms, the enzyme allows the repair of both epimers of NAD(P)HX, a damaged form of NAD(P)H that is a result of enzymatic or heat-dependent hydration. The chain is ADP-dependent (S)-NAD(P)H-hydrate dehydratase from Listeria monocytogenes serovar 1/2a (strain ATCC BAA-679 / EGD-e).